The chain runs to 308 residues: tRNA pseudouridine synthase B (308 aa).

The active-site Nucleophile is Asp-47.

The protein belongs to the pseudouridine synthase TruB family. Type 1 subfamily.

It carries out the reaction uridine(55) in tRNA = pseudouridine(55) in tRNA. Responsible for synthesis of pseudouridine from uracil-55 in the psi GC loop of transfer RNAs. This is tRNA pseudouridine synthase B from Xanthomonas oryzae pv. oryzae (strain MAFF 311018).